The sequence spans 633 residues: Threonine--tRNA ligase (633 aa).

In terms of domain architecture, TGS spans 1–61 (MINIHFSNNL…IENCTFEVIT (61 aa)). The segment at 242 to 533 (DHRKIGRELE…LIEHHSGKFP (292 aa)) is catalytic. C333, H384, and H510 together coordinate Zn(2+).

This sequence belongs to the class-II aminoacyl-tRNA synthetase family. As to quaternary structure, homodimer. Requires Zn(2+) as cofactor.

The protein localises to the cytoplasm. It catalyses the reaction tRNA(Thr) + L-threonine + ATP = L-threonyl-tRNA(Thr) + AMP + diphosphate + H(+). Functionally, catalyzes the attachment of threonine to tRNA(Thr) in a two-step reaction: L-threonine is first activated by ATP to form Thr-AMP and then transferred to the acceptor end of tRNA(Thr). Also edits incorrectly charged L-seryl-tRNA(Thr). The sequence is that of Threonine--tRNA ligase from Ehrlichia chaffeensis (strain ATCC CRL-10679 / Arkansas).